The chain runs to 1008 residues: Probable pre-mRNA-splicing factor ATP-dependent RNA helicase mog-4 (1008 aa).

2 disordered regions span residues 104 to 146 (SSTK…SESD) and 169 to 202 (NKKEKDKTRNVMEKKRDDNKDKEGSSMDKLREES). Residues 127–137 (KASKPGKSVKP) show a composition bias toward low complexity. Positions 374-538 (IEAVKEHQVL…FDDAPIFRIP (165 aa)) constitute a Helicase ATP-binding domain. An ATP-binding site is contributed by 387-394 (GETGSGKT). The DEAH box signature appears at 485-488 (DEAH). A Helicase C-terminal domain is found at 563–737 (TIMQIHLTQP…NVVLMLKSLG (175 aa)). The interval 988–1008 (EDATNKKMPKNKGKSGKDLER) is disordered.

It belongs to the DEAD box helicase family. DEAH subfamily. DDX16/PRP8 sub-subfamily. In terms of assembly, interacts with mep-1 and smn-1.

The protein localises to the nucleus. It catalyses the reaction ATP + H2O = ADP + phosphate + H(+). Its function is as follows. ATP-binding RNA helicase involved in pre-mRNA splicing. Operates during embryogenesis. This is Probable pre-mRNA-splicing factor ATP-dependent RNA helicase mog-4 (mog-4) from Caenorhabditis elegans.